The chain runs to 1689 residues: DNA-directed RNA polymerase I subunit rpa1 (1689 aa).

Zn(2+) contacts are provided by Cys-63, Cys-66, Cys-73, and His-76. A phosphoserine mark is found at Ser-159 and Ser-161. The span at 269 to 280 (VLRDTSKKHHED) shows a compositional bias: basic and acidic residues. The segment at 269-295 (VLRDTSKKHHEDEGYDGDSDSSNESEV) is disordered. A compositionally biased stretch (acidic residues) spans 281 to 295 (EGYDGDSDSSNESEV). Mg(2+) contacts are provided by Asp-643, Asp-645, and Asp-647. Residues 1005–1017 (PQEYYFHCMAGRE) are bridging helix. Positions 1346–1440 (RKSGGKDDTV…EEDEGFKSDE (95 aa)) are disordered. 2 positions are modified to phosphoserine: Ser-1438 and Ser-1441.

The protein belongs to the RNA polymerase beta' chain family. In terms of assembly, component of the RNA polymerase I (Pol I) complex consisting of at least 13 subunits.

It is found in the nucleus. The protein resides in the nucleolus. The enzyme catalyses RNA(n) + a ribonucleoside 5'-triphosphate = RNA(n+1) + diphosphate. Functionally, DNA-dependent RNA polymerase catalyzes the transcription of DNA into RNA using the four ribonucleoside triphosphates as substrates. Largest and catalytic core component of RNA polymerase I which synthesizes ribosomal RNA precursors. Forms the polymerase active center together with the second largest subunit. A single stranded DNA template strand of the promoter is positioned within the central active site cleft of Pol I. A bridging helix emanates from RPA1 and crosses the cleft near the catalytic site and is thought to promote translocation of Pol I by acting as a ratchet that moves the RNA-DNA hybrid through the active site by switching from straight to bent conformations at each step of nucleotide addition. The chain is DNA-directed RNA polymerase I subunit rpa1 (rpa1) from Schizosaccharomyces pombe (strain 972 / ATCC 24843) (Fission yeast).